Reading from the N-terminus, the 366-residue chain is Leucine dehydrogenase (366 aa).

Residue Lys-80 is part of the active site. Gly-180 to Tyr-186 contributes to the NAD(+) binding site.

The protein belongs to the Glu/Leu/Phe/Val dehydrogenases family. As to quaternary structure, homooctamer.

It catalyses the reaction L-leucine + NAD(+) + H2O = 4-methyl-2-oxopentanoate + NH4(+) + NADH + H(+). It participates in amino-acid degradation; L-leucine degradation; 4-methyl-2-oxopentanoate from L-leucine (dehydrogenase route): step 1/1. With respect to regulation, inhibited by pyridoxal phosphate. Catalyzes the reversible deamination of L-leucine to 4-methyl-2-oxopentanoate. Exhibits the highest activity with L-leucine as substrate, but can also use other L-amino acids such as L-isoleucine, L-valine and L-2-aminovaleric acid. All of the oxo analogs of the amino acid substrates serve as good substrates for the reverse reaction. In Thermoactinomyces intermedius, this protein is Leucine dehydrogenase (ldh).